The following is a 186-amino-acid chain: ATP synthase subunit b' (186 aa).

The chain crosses the membrane as a helical span at residues 39-59 (IFWLLLALGAIYWLLKNIAIP).

It belongs to the ATPase B chain family. As to quaternary structure, F-type ATPases have 2 components, F(1) - the catalytic core - and F(0) - the membrane proton channel. F(1) has five subunits: alpha(3), beta(3), gamma(1), delta(1), epsilon(1). F(0) has four main subunits: a(1), b(1), b'(1) and c(10-14). The alpha and beta chains form an alternating ring which encloses part of the gamma chain. F(1) is attached to F(0) by a central stalk formed by the gamma and epsilon chains, while a peripheral stalk is formed by the delta, b and b' chains.

Its subcellular location is the cellular chromatophore membrane. Functionally, f(1)F(0) ATP synthase produces ATP from ADP in the presence of a proton or sodium gradient. F-type ATPases consist of two structural domains, F(1) containing the extramembraneous catalytic core and F(0) containing the membrane proton channel, linked together by a central stalk and a peripheral stalk. During catalysis, ATP synthesis in the catalytic domain of F(1) is coupled via a rotary mechanism of the central stalk subunits to proton translocation. In terms of biological role, component of the F(0) channel, it forms part of the peripheral stalk, linking F(1) to F(0). The b'-subunit is a diverged and duplicated form of b found in plants and photosynthetic bacteria. The protein is ATP synthase subunit b' of Rhodobacter capsulatus (Rhodopseudomonas capsulata).